The following is a 252-amino-acid chain: Imidazole glycerol phosphate synthase subunit HisF (252 aa).

Residues Asp11 and Asp130 contribute to the active site.

It belongs to the HisA/HisF family. In terms of assembly, heterodimer of HisH and HisF.

It is found in the cytoplasm. The enzyme catalyses 5-[(5-phospho-1-deoxy-D-ribulos-1-ylimino)methylamino]-1-(5-phospho-beta-D-ribosyl)imidazole-4-carboxamide + L-glutamine = D-erythro-1-(imidazol-4-yl)glycerol 3-phosphate + 5-amino-1-(5-phospho-beta-D-ribosyl)imidazole-4-carboxamide + L-glutamate + H(+). It functions in the pathway amino-acid biosynthesis; L-histidine biosynthesis; L-histidine from 5-phospho-alpha-D-ribose 1-diphosphate: step 5/9. In terms of biological role, IGPS catalyzes the conversion of PRFAR and glutamine to IGP, AICAR and glutamate. The HisF subunit catalyzes the cyclization activity that produces IGP and AICAR from PRFAR using the ammonia provided by the HisH subunit. The chain is Imidazole glycerol phosphate synthase subunit HisF from Paramagnetospirillum magneticum (strain ATCC 700264 / AMB-1) (Magnetospirillum magneticum).